The chain runs to 356 residues: Transcription factor ATOH1 (356 aa).

Basic and acidic residues predominate over residues 1–21 (MSRLLHAEEWAEVKELGDHHR). Disordered stretches follow at residues 1–56 (MSRL…PELS) and 92–125 (SEAA…GPVK). The span at 26 to 40 (HHLPQPPPPPPPQPP) shows a compositional bias: pro residues. A compositionally biased stretch (basic and acidic residues) spans 96 to 109 (APRDEVDGRGELVR). A compositionally biased stretch (low complexity) spans 110-124 (RSSGGASSSKSPGPV). The 53-residue stretch at 161-213 (QRRLAANARERRRMHGLNHAFDQLRNVIPSFNNDKKLSKYETLQMAQIYINAL) folds into the bHLH domain. 2 disordered regions span residues 218–279 (QTPS…TRFS) and 314–356 (SPSL…DEAS). Positions 252 to 266 (NATAAGAQQASGGSQ) are enriched in low complexity. Residues 337-356 (HRSDGEFSPHSHYSDSDEAS) show a composition bias toward basic and acidic residues.

As to quaternary structure, efficient DNA binding requires dimerization with another bHLH protein.

The protein resides in the nucleus. Its function is as follows. Transcriptional regulator. Activates E box-dependent transcription in collaboration with TCF3/E47, but the activity is completely antagonized by the negative regulator of neurogenesis HES1. Plays a role in the differentiation of subsets of neural cells by activating E box-dependent transcription. The chain is Transcription factor ATOH1 from Pan troglodytes (Chimpanzee).